Reading from the N-terminus, the 406-residue chain is Bifunctional protein GlmU (406 aa).

Residues 1-221 (MFIILAAGHG…EEEATGINSR (221 aa)) form a pyrophosphorylase region. UDP-N-acetyl-alpha-D-glucosamine-binding positions include 5–8 (LAAG), lysine 19, glutamine 68, 73–74 (GT), 98–100 (YGD), glycine 134, glutamate 148, asparagine 162, and asparagine 219. Residue aspartate 100 coordinates Mg(2+). Asparagine 219 contributes to the Mg(2+) binding site. Residues 222 to 242 (NDLAKAEFYFQENRRKFFTDS) are linker. Positions 243 to 406 (GVTLVAPETV…RRKQMVKKIK (164 aa)) are N-acetyltransferase. Lysine 308 contributes to the UDP-N-acetyl-alpha-D-glucosamine binding site. Histidine 320 (proton acceptor) is an active-site residue. Residues tyrosine 323 and asparagine 334 each coordinate UDP-N-acetyl-alpha-D-glucosamine. Residues alanine 337, 343 to 344 (NY), alanine 380, and arginine 397 each bind acetyl-CoA.

The protein in the N-terminal section; belongs to the N-acetylglucosamine-1-phosphate uridyltransferase family. It in the C-terminal section; belongs to the transferase hexapeptide repeat family. Homotrimer. It depends on Mg(2+) as a cofactor.

It is found in the cytoplasm. The catalysed reaction is alpha-D-glucosamine 1-phosphate + acetyl-CoA = N-acetyl-alpha-D-glucosamine 1-phosphate + CoA + H(+). It carries out the reaction N-acetyl-alpha-D-glucosamine 1-phosphate + UTP + H(+) = UDP-N-acetyl-alpha-D-glucosamine + diphosphate. It participates in nucleotide-sugar biosynthesis; UDP-N-acetyl-alpha-D-glucosamine biosynthesis; N-acetyl-alpha-D-glucosamine 1-phosphate from alpha-D-glucosamine 6-phosphate (route II): step 2/2. It functions in the pathway nucleotide-sugar biosynthesis; UDP-N-acetyl-alpha-D-glucosamine biosynthesis; UDP-N-acetyl-alpha-D-glucosamine from N-acetyl-alpha-D-glucosamine 1-phosphate: step 1/1. The protein operates within bacterial outer membrane biogenesis; LPS lipid A biosynthesis. Functionally, catalyzes the last two sequential reactions in the de novo biosynthetic pathway for UDP-N-acetylglucosamine (UDP-GlcNAc). The C-terminal domain catalyzes the transfer of acetyl group from acetyl coenzyme A to glucosamine-1-phosphate (GlcN-1-P) to produce N-acetylglucosamine-1-phosphate (GlcNAc-1-P), which is converted into UDP-GlcNAc by the transfer of uridine 5-monophosphate (from uridine 5-triphosphate), a reaction catalyzed by the N-terminal domain. The sequence is that of Bifunctional protein GlmU from Wolbachia sp. subsp. Brugia malayi (strain TRS).